Reading from the N-terminus, the 338-residue chain is MNGLGGLNKSEHGVGIGLVQLQLPVTVTPQDLARQTQVIVDLVAKARRNQPGMDLVVFPEYALHGLSMDINPDIMCRMDGPEVAAFKAACKQNRIWGCFSIMEYNPGGMPYNSGIIIDDTGALKLYYRKMHPWVPVEPWEPGDLGIPVIDGPKGAKLALIICHDGMFPEMARECAYKGAEIMIRTAGYTAPIRESWRFTNQSNAFCNLMVTANVCMCGSDGTFDSMGEGMICNFDGSIIAHGTSGRVNEIITAEVRPDLVREARLGWGVENNIYQLGHRGYVAVAGGAQDAPYTYMHDLAAGRYRLPWEVEVKITDGTACGFEKPTRLYGKPAKSAAE.

In terms of domain architecture, CN hydrolase spans 14 to 257 (VGIGLVQLQL…NEIITAEVRP (244 aa)). Glu60 serves as the catalytic Proton acceptor. The active-site Proton donor is the Lys129. Cys162 (nucleophile) is an active-site residue.

It belongs to the carbon-nitrogen hydrolase superfamily. Aliphatic amidase family.

The enzyme catalyses formamide + H2O = formate + NH4(+). Is an aliphatic amidase with a restricted substrate specificity, as it only hydrolyzes formamide. This is Formamidase from Allorhizobium ampelinum (strain ATCC BAA-846 / DSM 112012 / S4) (Agrobacterium vitis (strain S4)).